A 218-amino-acid chain; its full sequence is Copper acquisition factor BIM1 (218 aa).

A signal peptide spans 1-19 (MFALKSILVTSLITSTALA). Cu(2+) contacts are provided by H20 and H65. Residues N87, N91, and N124 are each glycosylated (N-linked (GlcNAc...) asparagine). Residue D138 participates in Cu(2+) binding. N-linked (GlcNAc...) asparagine glycans are attached at residues N158 and N170. Residues 160–194 (TCTNDASKASNATSTSSGSATATSAAATSSSSGTS) are disordered. Over residues 165–194 (ASKASNATSTSSGSATATSAAATSSSSGTS) the composition is skewed to low complexity. A lipid anchor (GPI-anchor amidated serine) is attached at S190. The propeptide at 191-218 (SGTSGAIKEVVGFGALSLALGIAGLIIL) is removed in mature form.

It belongs to the X325 family. As to quaternary structure, interacts with the CUF1-dependent copper transporter CTR1. It depends on Cu(2+) as a cofactor.

It localises to the cell membrane. Functionally, lytic polysaccharide monooxygenase-like protein that has diverged to biological functions other than polysaccharide degradation since it does not perform oxidative cleavage of polysaccharides. Cell surface-bound protein that functions in the copper-accumulation pathway shared by the CUF1-dependent copper transporter CTR1. Involved in maintaining cell wall integrity during copper deficiency. Binds Cu(2+) with an estimated 1:1 stoichiometry and might serve as an extracellular copper ligand. FRE4 and FRE7 metalloreductases probably function together with CTR1 and BIM1 to liberate the Cu(2+) bound to the BIM1 copper-binding site for subsequent import of Cu(+) into the cell by CTR1, via the reduction of BIM1-bound Cu(2+) to Cu(+) to reduce binding affinity for BIM1 but increase affinity for CTR1. Facilitates copper acquisition in the brain of mammalian hosts and acts as a copper-dependent virulence trait in fungal meningitis. While BIM1 plays a critical role in cryptococcal meningitis, at least in part through its role in copper acquisition, it could play additional roles during copper limitation or as a means to invade and colonize host tissues in the brain, by compromising host carbohydrate integrity via its lytic polysaccharide monooxygenase (LPMO) activity, which has still to be determined. This Cryptococcus neoformans var. grubii serotype A (strain H99 / ATCC 208821 / CBS 10515 / FGSC 9487) (Filobasidiella neoformans var. grubii) protein is Copper acquisition factor BIM1.